Consider the following 354-residue polypeptide: Holliday junction branch migration complex subunit RuvB (354 aa).

Residues 1–22 (MTLQTDDFAPAPARRVVSAAPA) form a disordered region. Positions 5 to 194 (TDDFAPAPAR…FGIVARLEFY (190 aa)) are large ATPase domain (RuvB-L). Residues 9–22 (APAPARRVVSAAPA) are compositionally biased toward low complexity. ATP contacts are provided by residues leucine 33, arginine 34, glycine 75, lysine 78, threonine 79, threonine 80, 141–143 (EDY), arginine 184, tyrosine 194, and arginine 231. Threonine 79 contacts Mg(2+). The small ATPAse domain (RuvB-S) stretch occupies residues 195–265 (SAQELARIVK…IAERALAMLD (71 aa)). The interval 268–354 (PEGLDVMDRK…GAQAPGLFAV (87 aa)) is head domain (RuvB-H). Positions 323 and 328 each coordinate DNA.

Belongs to the RuvB family. In terms of assembly, homohexamer. Forms an RuvA(8)-RuvB(12)-Holliday junction (HJ) complex. HJ DNA is sandwiched between 2 RuvA tetramers; dsDNA enters through RuvA and exits via RuvB. An RuvB hexamer assembles on each DNA strand where it exits the tetramer. Each RuvB hexamer is contacted by two RuvA subunits (via domain III) on 2 adjacent RuvB subunits; this complex drives branch migration. In the full resolvosome a probable DNA-RuvA(4)-RuvB(12)-RuvC(2) complex forms which resolves the HJ.

It is found in the cytoplasm. It catalyses the reaction ATP + H2O = ADP + phosphate + H(+). Its function is as follows. The RuvA-RuvB-RuvC complex processes Holliday junction (HJ) DNA during genetic recombination and DNA repair, while the RuvA-RuvB complex plays an important role in the rescue of blocked DNA replication forks via replication fork reversal (RFR). RuvA specifically binds to HJ cruciform DNA, conferring on it an open structure. The RuvB hexamer acts as an ATP-dependent pump, pulling dsDNA into and through the RuvAB complex. RuvB forms 2 homohexamers on either side of HJ DNA bound by 1 or 2 RuvA tetramers; 4 subunits per hexamer contact DNA at a time. Coordinated motions by a converter formed by DNA-disengaged RuvB subunits stimulates ATP hydrolysis and nucleotide exchange. Immobilization of the converter enables RuvB to convert the ATP-contained energy into a lever motion, pulling 2 nucleotides of DNA out of the RuvA tetramer per ATP hydrolyzed, thus driving DNA branch migration. The RuvB motors rotate together with the DNA substrate, which together with the progressing nucleotide cycle form the mechanistic basis for DNA recombination by continuous HJ branch migration. Branch migration allows RuvC to scan DNA until it finds its consensus sequence, where it cleaves and resolves cruciform DNA. This Verminephrobacter eiseniae (strain EF01-2) protein is Holliday junction branch migration complex subunit RuvB.